The primary structure comprises 153 residues: Cyanate hydratase (153 aa).

Catalysis depends on residues Arg88, Glu91, and Ser114.

Belongs to the cyanase family.

The enzyme catalyses cyanate + hydrogencarbonate + 3 H(+) = NH4(+) + 2 CO2. Its function is as follows. Catalyzes the reaction of cyanate with bicarbonate to produce ammonia and carbon dioxide. The polypeptide is Cyanate hydratase (Mycolicibacterium vanbaalenii (strain DSM 7251 / JCM 13017 / BCRC 16820 / KCTC 9966 / NRRL B-24157 / PYR-1) (Mycobacterium vanbaalenii)).